Here is a 98-residue protein sequence, read N- to C-terminus: Cystatin-B (98 aa).

Residue methionine 1 is modified to N-acetylmethionine. Positions 46–50 match the Secondary area of contact motif; it reads QVVAG.

Belongs to the cystatin family.

The protein localises to the cytoplasm. Functionally, this is an intracellular thiol proteinase inhibitor. This chain is Cystatin-B (CSTB), found in Sus scrofa (Pig).